Here is an 809-residue protein sequence, read N- to C-terminus: MRRALRLLPLPLSIAICLPAMAADKPLNWGLCPAVDPLPGFDGAPAADPKAAEIRQQLPTDIEGDQLSGTSTTPQYQGNVALKRGDQFLGADNLRMDTETGNYIAEGNVRYQDTSFRMVADRAEGNQDTDSHKVTNIQYQLVDRRGNGGAESVDLQGQVGQMHRSTYTTCDPSQPIWRVRAPEIDVDNDEGFGTARNAVLQIGKVPVLYFPWFKFPIDDRRMTGLLFPQFGLSGRNGFDYLQPIYLNLAPNYDATLLPRYMSRRGFMFGTEFRYLYDGGRGEITGNYLPNDNLRKKDRGSVFYSGYHNVNRYWQARSSISWVSDTRYVEDFTSRINGMGSASSIQSTVGIYGTGETWTAGLMADRWQLTDYTLDERSLPYNRQPRAYFTWEKPFGIFEAGVYAEAVRFTHDDSYLVQPPRDGNTNGDDGDDYVRTNIRNQEYGSGSRLDLKPYISMPLSGSAWFLTPTVAWRYTAYQLDSTLANTAPLTGDRSPTRSLPIASLDAGLYFDRETSLFGTKYLNTLEPRAYYLYVPYREQNDLPVFDTRPFTFSYGQLFRDTRYTGADRQNDANQLTLAVTSRWLRQDDGREKLSLSAGQILYFNDSLVTINNSTNAAAGSEQTIEQGKSAWVADANYMINDRWSMGATYQWNPNSRKEDLASLRTRYLLNNDGIINLAYRYRRNLIDESDQLKQADFSFLYPINPTWSAVGRYYYSLLDRKPLEIIGGVQWDSCCLAVRALVRRFVRNRDGEMDNSIQFEFVLKGLSSFGQNTDRTLRRAILGYYRDDLYLVPPSNTTTNPDDYDPNLIP.

Residues 1–22 form the signal peptide; it reads MRRALRLLPLPLSIAICLPAMA.

This sequence belongs to the LptD family. As to quaternary structure, component of the lipopolysaccharide transport and assembly complex. Interacts with LptE and LptA.

The protein localises to the cell outer membrane. Functionally, together with LptE, is involved in the assembly of lipopolysaccharide (LPS) at the surface of the outer membrane. In Xanthomonas campestris pv. campestris (strain 8004), this protein is LPS-assembly protein LptD.